A 671-amino-acid chain; its full sequence is DNA ligase (671 aa).

NAD(+) contacts are provided by residues Asp32–Asp36, Ser81–Leu82, and Glu113. Lys115 (N6-AMP-lysine intermediate) is an active-site residue. Arg136, Glu173, Lys290, and Lys314 together coordinate NAD(+). 4 residues coordinate Zn(2+): Cys408, Cys411, Cys426, and Cys432. The 79-residue stretch at Glu593 to Ala671 folds into the BRCT domain.

Belongs to the NAD-dependent DNA ligase family. LigA subfamily. The cofactor is Mg(2+). Mn(2+) serves as cofactor.

It catalyses the reaction NAD(+) + (deoxyribonucleotide)n-3'-hydroxyl + 5'-phospho-(deoxyribonucleotide)m = (deoxyribonucleotide)n+m + AMP + beta-nicotinamide D-nucleotide.. Its function is as follows. DNA ligase that catalyzes the formation of phosphodiester linkages between 5'-phosphoryl and 3'-hydroxyl groups in double-stranded DNA using NAD as a coenzyme and as the energy source for the reaction. It is essential for DNA replication and repair of damaged DNA. The protein is DNA ligase of Salmonella typhimurium (strain LT2 / SGSC1412 / ATCC 700720).